The primary structure comprises 84 residues: Large ribosomal subunit protein bL27 (84 aa).

It belongs to the bacterial ribosomal protein bL27 family.

The chain is Large ribosomal subunit protein bL27 from Kocuria rhizophila (strain ATCC 9341 / DSM 348 / NBRC 103217 / DC2201).